The sequence spans 442 residues: Histidine--tRNA ligase (442 aa).

The tract at residues 416 to 442 (SGDETTVPVEEFPPEGGEELPTYEDYE) is disordered. Positions 427 to 442 (FPPEGGEELPTYEDYE) are enriched in acidic residues.

Belongs to the class-II aminoacyl-tRNA synthetase family.

It localises to the cytoplasm. The catalysed reaction is tRNA(His) + L-histidine + ATP = L-histidyl-tRNA(His) + AMP + diphosphate + H(+). The sequence is that of Histidine--tRNA ligase from Halorubrum lacusprofundi (strain ATCC 49239 / DSM 5036 / JCM 8891 / ACAM 34).